We begin with the raw amino-acid sequence, 206 residues long: Inosine triphosphate pyrophosphatase (206 aa).

21 to 26 lines the ITP pocket; that stretch reads TGNAKK. Residue glutamate 49 coordinates Mg(2+). ITP contacts are provided by residues lysine 61, 77–78, lysine 94, 153–156, lysine 176, and 181–182; these read DT, FGWD, and HR.

It belongs to the HAM1 NTPase family. In terms of assembly, homodimer. Mg(2+) serves as cofactor. It depends on Mn(2+) as a cofactor.

Its subcellular location is the cytoplasm. It carries out the reaction ITP + H2O = IMP + diphosphate + H(+). The catalysed reaction is dITP + H2O = dIMP + diphosphate + H(+). The enzyme catalyses XTP + H2O = XMP + diphosphate + H(+). Pyrophosphatase that hydrolyzes non-canonical purine nucleotides such as inosine triphosphate (ITP), deoxyinosine triphosphate (dITP) or xanthosine 5'-triphosphate (XTP) to their respective monophosphate derivatives. The enzyme does not distinguish between the deoxy- and ribose forms. Probably excludes non-canonical purines from RNA and DNA precursor pools, thus preventing their incorporation into RNA and DNA and avoiding chromosomal lesions. This chain is Inosine triphosphate pyrophosphatase, found in Vitis vinifera (Grape).